The chain runs to 506 residues: Maturase K (506 aa).

The protein belongs to the intron maturase 2 family. MatK subfamily.

It is found in the plastid. It localises to the chloroplast. Its function is as follows. Usually encoded in the trnK tRNA gene intron. Probably assists in splicing its own and other chloroplast group II introns. This is Maturase K from Trifolium incarnatum (Crimson clover).